The following is a 538-amino-acid chain: MSTSSSSRIAIEQNNKCVNSVAAALCPLSNCQFSGVVISAISDEQKLEFNSIYKSSCTLSCSYDSQGVLLRIMLDNDQGHVLKEYMISADTDAAQLGRRCYAVSLESDNLVLRFGSDKDQQLFRKVVENVKHLRPKSVFSQRTEESSASQYFQFYGYLSQQQNMMQDYVRTSTYQRAILGNSIDFQDKIVLDVGAGSGILSFFAVQAGAAKVYAIEASNMAQYAQQLVESNNVQHKISVIPGKIEEIELPEKVDVIISEPMGYMLYNERMLETYLHARKWLKPHGKMYPTHGDLHIAPFSDESLYSEQYNKANFWYQSAFHGVDLTTLHKEGMKEYFRQPIVDTFDIRICMAKSVRHVCDFLNDKEDDLHVIDIPLEFHILQTGICHGLAFWFDVEFSGSSQNVWLSTSPTAPLTHWYQVRCLLPMPIFIKQGQTLTGRVLLEANRRQSYDVTIDLHIEGTLISSSNTLDLKNPYFRYTGAPVQAPPGTNTQSPSEQYWTQMDTQGNRNSNSMLNGALTVNGMGDGGMDITHGLMHPH.

The SAM-dependent MTase PRMT-type domain maps to 148–457 (ASQYFQFYGY…QSYDVTIDLH (310 aa)). Positions 161, 170, 194, 216, 245, and 273 each coordinate S-adenosyl-L-methionine. R508 carries the post-translational modification Asymmetric dimethylarginine; by autocatalysis.

This sequence belongs to the class I-like SAM-binding methyltransferase superfamily. Protein arginine N-methyltransferase family. As to quaternary structure, homodimer. Post-translationally, the dimethylated protein is the major form.

It localises to the cytoplasm. Its subcellular location is the nucleus. It catalyses the reaction L-arginyl-[protein] + 2 S-adenosyl-L-methionine = N(omega),N(omega)-dimethyl-L-arginyl-[protein] + 2 S-adenosyl-L-homocysteine + 2 H(+). Functionally, methylates (mono- and asymmetric dimethylation) the guanidino nitrogens of arginyl residues in proteins. May methylate histone H3 at 'Arg-17' and activate transcription via chromatin remodeling. In Drosophila virilis (Fruit fly), this protein is Histone-arginine methyltransferase CARMER (Art4).